The chain runs to 600 residues: Probable tripeptidyl-peptidase SED4 (600 aa).

Residues 1 to 22 form the signal peptide; that stretch reads MVSFTLRAIGACLIGLPALITA. The propeptide at 23–202 is removed in mature form; the sequence is APTSHVSNGF…SVFTSDLEMT (180 aa). Asparagine 210 and asparagine 281 each carry an N-linked (GlcNAc...) asparagine glycan. Residues 212–600 form the Peptidase S53 domain; sequence TITPDCIREL…FEKLSKLVLI (389 aa). Active-site charge relay system residues include glutamate 288 and aspartate 292. 2 N-linked (GlcNAc...) asparagine glycosylation sites follow: asparagine 323 and asparagine 404. The active-site Charge relay system is the serine 504. Ca(2+) is bound by residues aspartate 546, isoleucine 547, glycine 579, and aspartate 581.

Ca(2+) serves as cofactor.

It localises to the secreted. The protein resides in the extracellular space. It carries out the reaction Release of an N-terminal tripeptide from a polypeptide.. Secreted tripeptidyl-peptidase which degrades proteins at acidic pHs and is involved in virulence. This Trichophyton verrucosum (strain HKI 0517) protein is Probable tripeptidyl-peptidase SED4 (SED4).